The chain runs to 236 residues: MHHEAPLYTWFGLTFNLANVLMITVTSVIVFVIAVLATRNLAMKPTGMQNFLEWVMDFVKGIIKSNMDWKTGGRFHMLGMTLIMYIFVANMLGLPFSVVIDNKLWWKSPTADPVVTLTLATMVVALSHYYGIKLNGFKEYAKGFVSPMPILFPLKIIEEFANTLTLGLRLYGNIFAGEILLALLAGSLATGVGGTIAAIIPTIAWQGFSIFVGAIQAFIFTMLTMVYMAHKVSHDH.

Helical transmembrane passes span 17–37 (LANV…AVLA), 80–100 (MTLI…SVVI), 114–134 (VVTL…GIKL), 179–199 (ILLA…IAAI), and 208–228 (FSIF…MVYM).

Belongs to the ATPase A chain family. In terms of assembly, F-type ATPases have 2 components, CF(1) - the catalytic core - and CF(0) - the membrane proton channel. CF(1) has five subunits: alpha(3), beta(3), gamma(1), delta(1), epsilon(1). CF(0) has three main subunits: a(1), b(2) and c(9-12). The alpha and beta chains form an alternating ring which encloses part of the gamma chain. CF(1) is attached to CF(0) by a central stalk formed by the gamma and epsilon chains, while a peripheral stalk is formed by the delta and b chains.

It localises to the cell membrane. In terms of biological role, key component of the proton channel; it plays a direct role in the translocation of protons across the membrane. The polypeptide is ATP synthase subunit a (Anoxybacillus flavithermus (strain DSM 21510 / WK1)).